The primary structure comprises 444 residues: MAKKYFGTDGVRGEVGQFPITPDFVLKLGYAAGQVLVQHDTDQKPTVLIGKDTRISGYMLEAALVAGFTAAGVNVVQTGPLPTPGVAYLTRALRLSAGVMISASHNTYSDNGIKFFAEGGVKLSDEVELEIEAKIDEEMKTQPSARLGRARRISGADDRYIEFCKSTFPGHSDLRGLKLVIDTANGAGYGVAPKVFHELGAQVVSIGNEPNGYNINEKCGATHTKTLQAAVLQNEADYGIALDGDGDRLMMVDKNRQVYDGDSLIYVIAKARAREGINIGGVVGTVMTNMAMEIALKEQGVDFCRAKVGDRYVLEQLNQRGWLIGGEASGHILCMDKHNTGDGIISALQVLAALQILNQDLATVCADWQPYPQTMINVRIQKGQKWQEASKDVLAEVEKELEGKGRVVLRASGTEPVVRVMVEARQADWARDGAERIAAAIGGI.

The Phosphoserine intermediate role is filled by S104. Positions 104, 243, 245, and 247 each coordinate Mg(2+). S104 carries the post-translational modification Phosphoserine.

This sequence belongs to the phosphohexose mutase family. Requires Mg(2+) as cofactor. Activated by phosphorylation.

The enzyme catalyses alpha-D-glucosamine 1-phosphate = D-glucosamine 6-phosphate. Functionally, catalyzes the conversion of glucosamine-6-phosphate to glucosamine-1-phosphate. This Neisseria gonorrhoeae (strain ATCC 700825 / FA 1090) protein is Phosphoglucosamine mutase.